A 487-amino-acid chain; its full sequence is MTITPQQLIAMLPLLIVGLTVVVVMLSIAWRRDHFINATLTVIGLNLALLSLYFVGQVGPMDVTPLMRVDGYSMFYTGLVIIASLATSTFAYPWLVGYPDNREEFYLLVLIAALGGILLTSANHLASLFLGIELLTLPLFGLIGYAYRQKRSLEASIKYMLLSAAASSFLLFGMALLYAESGSLSFVGLGQSLSDSMVHQPLILAGLGMMIVGLGFKLSLVPFQLWTPDVYQGAPAPVSTFLATASKIAIFAVVMRLFMYAPAADSEAVRLVLSIIAVASILFGNLMAISQTNIKRLLGYSSIAHLGYLLIALVAVQTHELALPLETIGVYLAGYLFSSLGAFGVVSLMSSPYKGPDAESLFSYRGLFWHKPILSAVMTVMMLSLAGIPMTLGFIGKFFVVAMGVSANLWWLTGAVVLGSAIGLYYYLRVTVSLFLSPPQSLVRDTPSNWALTAGGVVVLISAILVLVLGIYPQPLITLVQMAQPLM.

14 consecutive transmembrane segments (helical) span residues 8 to 28, 35 to 55, 78 to 98, 104 to 124, 125 to 145, 159 to 179, 203 to 223, 235 to 255, 271 to 291, 297 to 317, 328 to 348, 376 to 396, 409 to 428, and 451 to 471; these read LIAM…MLSI, FINA…LYFV, GLVI…LVGY, EFYL…SANH, LASL…LIGY, YMLL…LLYA, ILAG…LVPF, PAPV…AVVM, LVLS…AISQ, LLGY…VAVQ, IGVY…VVSL, AVMT…GFIG, LWWL…YYYL, and ALTA…VLGI.

The protein belongs to the complex I subunit 2 family. As to quaternary structure, NDH-1 is composed of 13 different subunits. Subunits NuoA, H, J, K, L, M, N constitute the membrane sector of the complex.

The protein resides in the cell inner membrane. The catalysed reaction is a quinone + NADH + 5 H(+)(in) = a quinol + NAD(+) + 4 H(+)(out). Its function is as follows. NDH-1 shuttles electrons from NADH, via FMN and iron-sulfur (Fe-S) centers, to quinones in the respiratory chain. The immediate electron acceptor for the enzyme in this species is believed to be ubiquinone. Couples the redox reaction to proton translocation (for every two electrons transferred, four hydrogen ions are translocated across the cytoplasmic membrane), and thus conserves the redox energy in a proton gradient. The chain is NADH-quinone oxidoreductase subunit N from Yersinia pestis bv. Antiqua (strain Angola).